A 91-amino-acid chain; its full sequence is Insertion element IS1 7 protein InsA (91 aa).

The protein belongs to the IS1 elements InsA family.

Absolutely required for transposition of IS1. In Escherichia coli (strain K12), this protein is Insertion element IS1 7 protein InsA (insA7).